Here is a 92-residue protein sequence, read N- to C-terminus: Small ribosomal subunit protein bS18 (92 aa).

A disordered region spans residues 1–27; that stretch reads MTQQSNSADRKPRGKGPKRPRKPKVDP. Basic residues predominate over residues 12–22; the sequence is PRGKGPKRPRK.

The protein belongs to the bacterial ribosomal protein bS18 family. Part of the 30S ribosomal subunit. Forms a tight heterodimer with protein bS6.

In terms of biological role, binds as a heterodimer with protein bS6 to the central domain of the 16S rRNA, where it helps stabilize the platform of the 30S subunit. This chain is Small ribosomal subunit protein bS18, found in Deinococcus deserti (strain DSM 17065 / CIP 109153 / LMG 22923 / VCD115).